We begin with the raw amino-acid sequence, 256 residues long: uncharacterized protein (256 aa).

The first 23 residues, 1–23 (MKRLNKLVLGIIFLFLVISITAG), serve as a signal peptide directing secretion. A lipid anchor (N-palmitoyl cysteine) is attached at Cys-24. A lipid anchor (S-diacylglycerol cysteine) is attached at Cys-24.

The protein belongs to the staphylococcal tandem lipoprotein family.

The protein localises to the cell membrane. This is an uncharacterized protein from Staphylococcus aureus (strain COL).